The following is a 60-amino-acid chain: Potassium channel toxin alpha-KTx 29.3 (60 aa).

The first 28 residues, 1–28 (MKSVCGVLIILVVLTTMLSISTFSTVGA), serve as a signal peptide directing secretion. 3 cysteine pairs are disulfide-bonded: Cys-32–Cys-51, Cys-40–Cys-56, and Cys-44–Cys-58.

It belongs to the short scorpion toxin superfamily. Potassium channel inhibitor family. Alpha-KTx 29 subfamily. As to expression, expressed by the venom gland.

The protein localises to the secreted. Functionally, weakly inhibits the Kv1.3/KCNA3 channel (1 uM of thetoxin inhibits currents by 13.2%) and Kv7.1/KCNQ1 channel (10 uM of the toxin inhibits currents by 27.7%). The polypeptide is Potassium channel toxin alpha-KTx 29.3 (Lychas mucronatus (Chinese swimming scorpion)).